The sequence spans 562 residues: Potassium voltage-gated channel subfamily V member 2 (562 aa).

Basic and acidic residues predominate over residues Met1–Trp10. Residues Met1–Arg34 form a disordered region. The Cytoplasmic portion of the chain corresponds to Met1–Pro163. A helical transmembrane segment spans residues Ala164 to Leu184. At Cys185–Ala269 the chain is on the extracellular side. The chain crosses the membrane as a helical span at residues Met270–Val290. At Glu291–Asn344 the chain is on the cytoplasmic side. The helical transmembrane segment at Leu345–Ser365 threads the bilayer. Residues Glu366–Gln391 are Extracellular-facing. A helical; Voltage-sensor transmembrane segment spans residues Val392 to Thr412. Residues Gly413–Gln427 are Cytoplasmic-facing. The chain crosses the membrane as a helical span at residues Val428–Ser448. At Val449 to Ile461 the chain is on the extracellular side. The N-linked (GlcNAc...) asparagine glycan is linked to Asn457. Positions Leu462 to Pro482 form an intramembrane region, pore-forming. Residues Thr474–Asp479 carry the Selectivity filter motif. The Extracellular segment spans residues Glu483 to Arg488. A helical membrane pass occupies residues Leu489–Leu509. Residues Tyr510 to Asn562 are Cytoplasmic-facing.

This sequence belongs to the potassium channel family. V (TC 1.A.1.2) subfamily. Kv8.2/KCNV2 sub-subfamily. In terms of assembly, heteromultimer with KCNB1, KCNC1 and KCNF1. Does not form homomultimers.

It is found in the cell membrane. In terms of biological role, potassium channel subunit. Modulates channel activity by shifting the threshold and the half-maximal activation to more negative values. The chain is Potassium voltage-gated channel subfamily V member 2 (Kcnv2) from Mus musculus (Mouse).